Here is a 341-residue protein sequence, read N- to C-terminus: Holliday junction branch migration complex subunit RuvB (341 aa).

The interval 1 to 180 is large ATPase domain (RuvB-L); that stretch reads MAKSHTLNPE…FGIQLRLDYY (180 aa). ATP-binding residues include Leu-19, Arg-20, Gly-61, Lys-64, Thr-65, Thr-66, Arg-170, Tyr-180, and Arg-217. Thr-65 is a binding site for Mg(2+). The tract at residues 181 to 251 is small ATPAse domain (RuvB-S); the sequence is NDEEMKEIVL…LCLKAFEKMG (71 aa). The interval 254 to 341 is head domain (RuvB-H); it reads DLGLDGMDRQ…ENHGQDPTLF (88 aa). DNA is bound by residues Arg-309 and Arg-314.

Belongs to the RuvB family. As to quaternary structure, homohexamer. Forms an RuvA(8)-RuvB(12)-Holliday junction (HJ) complex. HJ DNA is sandwiched between 2 RuvA tetramers; dsDNA enters through RuvA and exits via RuvB. An RuvB hexamer assembles on each DNA strand where it exits the tetramer. Each RuvB hexamer is contacted by two RuvA subunits (via domain III) on 2 adjacent RuvB subunits; this complex drives branch migration. In the full resolvosome a probable DNA-RuvA(4)-RuvB(12)-RuvC(2) complex forms which resolves the HJ.

It is found in the cytoplasm. It carries out the reaction ATP + H2O = ADP + phosphate + H(+). Functionally, the RuvA-RuvB-RuvC complex processes Holliday junction (HJ) DNA during genetic recombination and DNA repair, while the RuvA-RuvB complex plays an important role in the rescue of blocked DNA replication forks via replication fork reversal (RFR). RuvA specifically binds to HJ cruciform DNA, conferring on it an open structure. The RuvB hexamer acts as an ATP-dependent pump, pulling dsDNA into and through the RuvAB complex. RuvB forms 2 homohexamers on either side of HJ DNA bound by 1 or 2 RuvA tetramers; 4 subunits per hexamer contact DNA at a time. Coordinated motions by a converter formed by DNA-disengaged RuvB subunits stimulates ATP hydrolysis and nucleotide exchange. Immobilization of the converter enables RuvB to convert the ATP-contained energy into a lever motion, pulling 2 nucleotides of DNA out of the RuvA tetramer per ATP hydrolyzed, thus driving DNA branch migration. The RuvB motors rotate together with the DNA substrate, which together with the progressing nucleotide cycle form the mechanistic basis for DNA recombination by continuous HJ branch migration. Branch migration allows RuvC to scan DNA until it finds its consensus sequence, where it cleaves and resolves cruciform DNA. The chain is Holliday junction branch migration complex subunit RuvB from Leptospira borgpetersenii serovar Hardjo-bovis (strain L550).